Reading from the N-terminus, the 40-residue chain is Dihydrolipoyl dehydrogenase (40 aa).

Residue 36–40 (EKRGT) coordinates FAD.

Belongs to the class-I pyridine nucleotide-disulfide oxidoreductase family. As to quaternary structure, homodimer. Requires FAD as cofactor.

It localises to the mitochondrion matrix. It carries out the reaction N(6)-[(R)-dihydrolipoyl]-L-lysyl-[protein] + NAD(+) = N(6)-[(R)-lipoyl]-L-lysyl-[protein] + NADH + H(+). Functionally, lipoamide dehydrogenase is a component of the glycine cleavage system as well as of the alpha-ketoacid dehydrogenase complexes. The pyruvate dehydrogenase complex contains multiple copies of three enzymatic components: pyruvate dehydrogenase (E1), dihydrolipoamide acetyltransferase (E2) and lipoamide dehydrogenase (E3). The protein is Dihydrolipoyl dehydrogenase of Solanum tuberosum (Potato).